A 470-amino-acid polypeptide reads, in one-letter code: Coproporphyrinogen III oxidase (470 aa).

FAD-binding positions include 12–17 (GGGITG), 41–42 (EA), Lys49, 63–66 (GPDS), Val256, Trp409, and 448–450 (VGI).

The protein belongs to the protoporphyrinogen/coproporphyrinogen oxidase family. Coproporphyrinogen III oxidase subfamily. In terms of assembly, monomer. It depends on FAD as a cofactor.

Its subcellular location is the cytoplasm. The protein resides in the cell membrane. It catalyses the reaction coproporphyrinogen III + 3 O2 = coproporphyrin III + 3 H2O2. It functions in the pathway porphyrin-containing compound metabolism; protoheme biosynthesis. With respect to regulation, only weakly inhibited by acifluorfen, in contrast to eukaryotic family members. Weakly inhibited by methylacifluorfen. Bilirubin, biliverdin and hemin are all competitive inhibitors. Its function is as follows. Involved in coproporphyrin-dependent heme b biosynthesis. Catalyzes the oxidation of coproporphyrinogen III to coproporphyrin III. Can also oxidize protoporphyrinogen IX to protoporphyrin-IX. The specific activity for the oxidation of coproporphyrinogen III is much higher than that for the oxidation of protoporphyrinogen IX. Can also oxidize mesoporphyrinogen IX, but not uroporphyrinogen III. This is Coproporphyrinogen III oxidase from Bacillus subtilis (strain 168).